A 90-amino-acid chain; its full sequence is Antitoxin epsilon 2 (90 aa).

Belongs to the epsilon antitoxin family. As to quaternary structure, in the presence of the zeta toxin, forms an inactive PezA(2)PezT(2) heterotetramer.

Its function is as follows. Antitoxin component of a type II toxin-antitoxin (TA) system. Neutralizes the toxic effect of zeta toxin. Part of a postsegregational killing (PSK) system involved in the killing of plasmid-free cells. Continuous synthesis of the epsilon antitoxin is required to counteract the zeta toxin. This Enterococcus faecalis (Streptococcus faecalis) protein is Antitoxin epsilon 2.